The primary structure comprises 1025 residues: Multidrug resistance protein MdtC (1025 aa).

12 helical membrane passes run 3–23 (FFAL…AITL), 333–353 (EVEQ…FLFL), 360–380 (IIPA…MYLC), 387–407 (LSLM…IVVL), 431–451 (VGFT…PLLL), 463–483 (FAVT…TLTP), 528–548 (LVGV…ISIP), 853–873 (VILI…LYES), 875–895 (VHPL…LLAL), 897–917 (LFNA…IGIV), 953–973 (PIMM…LSGG), and 984–1004 (ITIV…TPVV).

It belongs to the resistance-nodulation-cell division (RND) (TC 2.A.6) family. MdtC subfamily. Part of a tripartite efflux system composed of MdtA, MdtB and MdtC. MdtC forms a heteromultimer with MdtB.

The protein localises to the cell inner membrane. The MdtABC tripartite complex confers resistance against novobiocin and deoxycholate. The polypeptide is Multidrug resistance protein MdtC (Escherichia coli (strain K12 / MC4100 / BW2952)).